Reading from the N-terminus, the 1220-residue chain is DNA-directed RNA polymerase subunit beta' (1220 aa).

Zn(2+)-binding residues include Cys61, Cys63, Cys76, and Cys79. 3 residues coordinate Mg(2+): Asp450, Asp452, and Asp454. Residues Gln1197–Glu1220 form a disordered region. A compositionally biased stretch (basic and acidic residues) spans Pro1209–Glu1220.

This sequence belongs to the RNA polymerase beta' chain family. As to quaternary structure, the RNAP catalytic core consists of 2 alpha, 1 beta, 1 beta' and 1 omega subunit. When a sigma factor is associated with the core the holoenzyme is formed, which can initiate transcription. Requires Mg(2+) as cofactor. Zn(2+) serves as cofactor.

It catalyses the reaction RNA(n) + a ribonucleoside 5'-triphosphate = RNA(n+1) + diphosphate. Its function is as follows. DNA-dependent RNA polymerase catalyzes the transcription of DNA into RNA using the four ribonucleoside triphosphates as substrates. In Leuconostoc citreum (strain KM20), this protein is DNA-directed RNA polymerase subunit beta'.